The following is a 125-amino-acid chain: Histone H2A (125 aa).

The span at Met-1–Ser-18 shows a compositional bias: basic residues. Positions Met-1 to Ala-21 are disordered. Residue Ser-2 is modified to N-acetylserine. Gln-104 carries the N5-methylglutamine modification.

The protein belongs to the histone H2A family. In terms of assembly, the nucleosome is a histone octamer containing two molecules each of H2A, H2B, H3 and H4 assembled in one H3-H4 heterotetramer and two H2A-H2B heterodimers. The octamer wraps approximately 147 bp of DNA.

The protein localises to the nucleus. It is found in the chromosome. Functionally, core component of nucleosome. Nucleosomes wrap and compact DNA into chromatin, limiting DNA accessibility to the cellular machineries which require DNA as a template. Histones thereby play a central role in transcription regulation, DNA repair, DNA replication and chromosomal stability. DNA accessibility is regulated via a complex set of post-translational modifications of histones, also called histone code, and nucleosome remodeling. This is Histone H2A from Mytilus trossulus (Blue mussel).